The chain runs to 142 residues: Large ribosomal subunit protein uL22c (142 aa).

It belongs to the universal ribosomal protein uL22 family. As to quaternary structure, part of the 50S ribosomal subunit.

The protein localises to the plastid. The protein resides in the chloroplast. This protein binds specifically to 23S rRNA. Functionally, the globular domain of the protein is located near the polypeptide exit tunnel on the outside of the subunit, while an extended beta-hairpin is found that lines the wall of the exit tunnel in the center of the 70S ribosome. The sequence is that of Large ribosomal subunit protein uL22c (rpl22) from Picea abies (Norway spruce).